The sequence spans 594 residues: E3 ubiquitin-protein ligase TRAF7 (594 aa).

The tract at residues 1–33 (MPPINTPRRSDSAISVRSLHSESSMSLRSTFSL) is disordered. Residues serine 12 and serine 15 each carry the phosphoserine modification. The segment covering 15–29 (SVRSLHSESSMSLRS) has biased composition (low complexity). The RING-type zinc-finger motif lies at 55–89 (CQLCCSVFKDPVITTCGHTFCRRCALKSEKCPVDN). The TRAF-type zinc finger occupies 146 to 216 (HESSCDYRPV…RFEGLKEFLQ (71 aa)). WD repeat units lie at residues 318-357 (GHQG…KCQK), 361-398 (GHDG…KVNT), 401-437 (AHDN…LKLK), 439-478 (ELTG…CIHV), 481-518 (TSGG…QVRT), 521-562 (GHVG…CTQT), and 565-593 (RHQG…KVWT).

It belongs to the WD repeat TRAF7 family. As to quaternary structure, homodimer. Interacts with MAP3K3 and promotes the kinase activity of this enzyme. In terms of processing, phosphorylated by MAP3K3. Ubiquitinates itself upon phosphorylation. In terms of tissue distribution, ubiquitously expressed. Expression is relatively high in heart, liver, kidney, testis, prostate, thyroid, and salivary gland.

The protein resides in the cytoplasmic vesicle. The protein localises to the cytoplasm. It is found in the nucleus. It carries out the reaction S-ubiquitinyl-[E2 ubiquitin-conjugating enzyme]-L-cysteine + [acceptor protein]-L-lysine = [E2 ubiquitin-conjugating enzyme]-L-cysteine + N(6)-ubiquitinyl-[acceptor protein]-L-lysine.. The protein operates within protein modification; protein ubiquitination. E3 ubiquitin and SUMO-protein ligase that plays a role in different biological processes such as innate immunity, inflammation or apoptosis. Potentiates MAP3K3-mediated activation of the NF-kappa-B, JUN/AP1 and DDIT3 transcriptional regulators. Negatively regulates MYB transcriptional activity by sequestering it to the cytosol via SUMOylation. Plays a role in the phosphorylation of MAPK1 and/or MAPK3, probably via its interaction with MAP3K3. Negatively regulates RLR-mediated innate immunity by promoting 'Lys-48'-linked ubiquitination of TBK1 through its RING domain to inhibit the cellular antiviral response. Promotes 'Lys-29'-linked polyubiquitination of NEMO/IKBKG and RELA leading to targeting these two proteins to lysosomal degradative pathways, reducing the transcriptional activity of NF-kappa-B. In Mus musculus (Mouse), this protein is E3 ubiquitin-protein ligase TRAF7.